A 381-amino-acid chain; its full sequence is MSHFLPFSRPAIGDEEIKAVESVLRSGWITTGPQNHQLEQDFCEKFGSKHAIAVCSATAGMHVVLMAMGIGPGDEVITPSQTWVSTINIITLLGAEPVMVDIDRDTLMVSAESVKKAITPRTKAIIPVHYAGAPCDLDALRAVADEAGIPLIEDAAHAIGTRYKDEWIGEKGTSIFSFHAIKNVTCAEGGLVVTDDDELANRVRCLKFHGLGVDAFDRQVQGRKPQAEVVEPGYKYNLSDIHAAIAVVQLSRLEEMNAKRAELVALYREKLQDSPLEMLSVPEYPHLHANHLFMVRVDKNACGIDRDTFMEKLKQKEIGTGLHFRAAHTQKYYRERYPSLSLPQSEWNSATLCSLPLFPDMSNKDVIRVVDAINEILSEHI.

Lys182 is modified (N6-(pyridoxal phosphate)lysine).

The protein belongs to the DegT/DnrJ/EryC1 family. ArnB subfamily. As to quaternary structure, homodimer. Pyridoxal 5'-phosphate serves as cofactor.

The catalysed reaction is UDP-4-amino-4-deoxy-beta-L-arabinose + 2-oxoglutarate = UDP-beta-L-threo-pentopyranos-4-ulose + L-glutamate. Its pathway is nucleotide-sugar biosynthesis; UDP-4-deoxy-4-formamido-beta-L-arabinose biosynthesis; UDP-4-deoxy-4-formamido-beta-L-arabinose from UDP-alpha-D-glucuronate: step 2/3. The protein operates within bacterial outer membrane biogenesis; lipopolysaccharide biosynthesis. Catalyzes the conversion of UDP-4-keto-arabinose (UDP-Ara4O) to UDP-4-amino-4-deoxy-L-arabinose (UDP-L-Ara4N). The modified arabinose is attached to lipid A and is required for resistance to polymyxin and cationic antimicrobial peptides. The protein is UDP-4-amino-4-deoxy-L-arabinose--oxoglutarate aminotransferase of Proteus mirabilis (strain HI4320).